We begin with the raw amino-acid sequence, 154 residues long: Iron-sulfur cluster assembly 2 homolog, mitochondrial (154 aa).

A mitochondrion-targeting transit peptide spans 1 to 8 (MAASRALS). Residues cysteine 79, cysteine 144, and cysteine 146 each contribute to the Fe cation site.

This sequence belongs to the HesB/IscA family. As to quaternary structure, heterotetramer; forms a dimer of dimers with IBA57. Interacts with [2Fe-2S]-ISCA2 forming the heterodimer [2Fe- 2S]-ISCA2-IBA57 complex; [2Fe-2S] cluster binding is absolutely required to promote the complex formation.

Its subcellular location is the mitochondrion. Its function is as follows. Involved in the maturation of mitochondrial 4Fe-4S proteins functioning late in the iron-sulfur cluster assembly pathway. May be involved in the binding of an intermediate of Fe/S cluster assembly. This Mus musculus (Mouse) protein is Iron-sulfur cluster assembly 2 homolog, mitochondrial (Isca2).